The primary structure comprises 461 residues: Bifunctional protein GlmU (461 aa).

A pyrophosphorylase region spans residues 1–232 (MNLQIIILAA…SFEVQGINNR (232 aa)). UDP-N-acetyl-alpha-D-glucosamine is bound by residues 8–11 (LAAG), lysine 22, glutamine 73, and 78–79 (GT). Residue aspartate 102 coordinates Mg(2+). Residues glycine 142, glutamate 157, and asparagine 230 each coordinate UDP-N-acetyl-alpha-D-glucosamine. Mg(2+) is bound at residue asparagine 230. The segment at 233–253 (QQLQQLERIWQQRAANQLMEK) is linker. The interval 254-461 (GVTLADANRF…WKRPAKRERD (208 aa)) is N-acetyltransferase. UDP-N-acetyl-alpha-D-glucosamine contacts are provided by arginine 336 and lysine 354. Catalysis depends on histidine 366, which acts as the Proton acceptor. Positions 369 and 380 each coordinate UDP-N-acetyl-alpha-D-glucosamine. Residues alanine 383, 389–390 (NY), serine 408, and alanine 426 each bind acetyl-CoA.

This sequence in the N-terminal section; belongs to the N-acetylglucosamine-1-phosphate uridyltransferase family. The protein in the C-terminal section; belongs to the transferase hexapeptide repeat family. As to quaternary structure, homotrimer. The cofactor is Mg(2+).

The protein resides in the cytoplasm. The enzyme catalyses alpha-D-glucosamine 1-phosphate + acetyl-CoA = N-acetyl-alpha-D-glucosamine 1-phosphate + CoA + H(+). It catalyses the reaction N-acetyl-alpha-D-glucosamine 1-phosphate + UTP + H(+) = UDP-N-acetyl-alpha-D-glucosamine + diphosphate. The protein operates within nucleotide-sugar biosynthesis; UDP-N-acetyl-alpha-D-glucosamine biosynthesis; N-acetyl-alpha-D-glucosamine 1-phosphate from alpha-D-glucosamine 6-phosphate (route II): step 2/2. It functions in the pathway nucleotide-sugar biosynthesis; UDP-N-acetyl-alpha-D-glucosamine biosynthesis; UDP-N-acetyl-alpha-D-glucosamine from N-acetyl-alpha-D-glucosamine 1-phosphate: step 1/1. It participates in bacterial outer membrane biogenesis; LPS lipid A biosynthesis. Catalyzes the last two sequential reactions in the de novo biosynthetic pathway for UDP-N-acetylglucosamine (UDP-GlcNAc). The C-terminal domain catalyzes the transfer of acetyl group from acetyl coenzyme A to glucosamine-1-phosphate (GlcN-1-P) to produce N-acetylglucosamine-1-phosphate (GlcNAc-1-P), which is converted into UDP-GlcNAc by the transfer of uridine 5-monophosphate (from uridine 5-triphosphate), a reaction catalyzed by the N-terminal domain. This is Bifunctional protein GlmU from Legionella pneumophila (strain Lens).